The sequence spans 81 residues: Putative defensin-like protein 148 (81 aa).

A signal peptide spans 1-24; that stretch reads MIKSFQLSFTVLIVFTVLILGVVG. Intrachain disulfides connect C34/C80, C43/C63, C48/C74, and C52/C76.

The protein belongs to the DEFL family.

The protein localises to the secreted. In Arabidopsis thaliana (Mouse-ear cress), this protein is Putative defensin-like protein 148 (LCR4).